A 796-amino-acid chain; its full sequence is Phenylalanine--tRNA ligase beta subunit (796 aa).

The tRNA-binding domain maps to 39–149 (SAALKSFRVA…GDAPLGTTFA (111 aa)). The 73-residue stretch at 398–470 (LARKALAYDP…RVHGLDAVPS (73 aa)) folds into the B5 domain. Mg(2+) contacts are provided by D448, D454, E457, and E458. Residues 703-795 (PALQAVTRDF…AAGKLGAELR (93 aa)) enclose the FDX-ACB domain.

This sequence belongs to the phenylalanyl-tRNA synthetase beta subunit family. Type 1 subfamily. Tetramer of two alpha and two beta subunits. The cofactor is Mg(2+).

It localises to the cytoplasm. It carries out the reaction tRNA(Phe) + L-phenylalanine + ATP = L-phenylalanyl-tRNA(Phe) + AMP + diphosphate + H(+). The chain is Phenylalanine--tRNA ligase beta subunit from Novosphingobium aromaticivorans (strain ATCC 700278 / DSM 12444 / CCUG 56034 / CIP 105152 / NBRC 16084 / F199).